Reading from the N-terminus, the 223-residue chain is Deoxyribose-phosphate aldolase (223 aa).

The active-site Proton donor/acceptor is D92. K154 acts as the Schiff-base intermediate with acetaldehyde in catalysis. K182 (proton donor/acceptor) is an active-site residue.

The protein belongs to the DeoC/FbaB aldolase family. DeoC type 1 subfamily.

Its subcellular location is the cytoplasm. The enzyme catalyses 2-deoxy-D-ribose 5-phosphate = D-glyceraldehyde 3-phosphate + acetaldehyde. The protein operates within carbohydrate degradation; 2-deoxy-D-ribose 1-phosphate degradation; D-glyceraldehyde 3-phosphate and acetaldehyde from 2-deoxy-alpha-D-ribose 1-phosphate: step 2/2. Functionally, catalyzes a reversible aldol reaction between acetaldehyde and D-glyceraldehyde 3-phosphate to generate 2-deoxy-D-ribose 5-phosphate. This is Deoxyribose-phosphate aldolase from Pasteurella multocida (strain Pm70).